The sequence spans 344 residues: Anthranilate phosphoribosyltransferase (344 aa).

Residues G86, 89–90, T94, 96–99, 114–122, and S126 contribute to the 5-phospho-alpha-D-ribose 1-diphosphate site; these read GD, NIST, and KHGNKSASG. G86 serves as a coordination point for anthranilate. S98 is a binding site for Mg(2+). Residue N117 coordinates anthranilate. R172 provides a ligand contact to anthranilate. Positions 231 and 232 each coordinate Mg(2+).

Belongs to the anthranilate phosphoribosyltransferase family. In terms of assembly, homodimer. Mg(2+) is required as a cofactor.

The enzyme catalyses N-(5-phospho-beta-D-ribosyl)anthranilate + diphosphate = 5-phospho-alpha-D-ribose 1-diphosphate + anthranilate. It functions in the pathway amino-acid biosynthesis; L-tryptophan biosynthesis; L-tryptophan from chorismate: step 2/5. Functionally, catalyzes the transfer of the phosphoribosyl group of 5-phosphorylribose-1-pyrophosphate (PRPP) to anthranilate to yield N-(5'-phosphoribosyl)-anthranilate (PRA). The polypeptide is Anthranilate phosphoribosyltransferase (Prochlorococcus marinus (strain MIT 9301)).